The chain runs to 293 residues: MQIIHTIEELRQALAPARQQGKKIGFVPTMGYLHKGHLELVRRARVENDVTLVSIFVNPLQFGANEDLGRYPRDLERDAGLLHDAQVDYLFAPTVSDMYPRPMQTVVDVPPLGNQMEGEARPGHFAGVATVVSKLFNIVGPDAAYFGEKDFQQLVIIRRMVDDMAIPVRIVGVETVREDDGLACSSRNVYLTPEQRRAAIIVPQALDEADRLYRSGMDDPDALEAAIRTFISRQPLAVPEVIAIRDPETLERLPALQGRPILVALFVRVGATRLLDNRVIGHAAPQITQERAA.

30-37 (MGYLHKGH) serves as a coordination point for ATP. His37 functions as the Proton donor in the catalytic mechanism. (R)-pantoate is bound at residue Gln61. Gln61 is a binding site for beta-alanine. 147–150 (GEKD) lines the ATP pocket. Gln153 is a (R)-pantoate binding site. ATP is bound by residues Val176 and 184–187 (CSSR).

This sequence belongs to the pantothenate synthetase family. In terms of assembly, homodimer.

The protein localises to the cytoplasm. The catalysed reaction is (R)-pantoate + beta-alanine + ATP = (R)-pantothenate + AMP + diphosphate + H(+). Its pathway is cofactor biosynthesis; (R)-pantothenate biosynthesis; (R)-pantothenate from (R)-pantoate and beta-alanine: step 1/1. Its function is as follows. Catalyzes the condensation of pantoate with beta-alanine in an ATP-dependent reaction via a pantoyl-adenylate intermediate. This Brucella canis (strain ATCC 23365 / NCTC 10854 / RM-666) protein is Pantothenate synthetase.